The sequence spans 385 residues: Protein hunchback (385 aa).

2 disordered regions span residues Ile1–Met94 and Glu124–Arg216. Positions Ser63 to Ser77 are enriched in low complexity. 2 stretches are compositionally biased toward basic and acidic residues: residues Arg126 to Pro135 and Pro173 to Ser203. 4 consecutive C2H2-type zinc fingers follow at residues Phe229–His251, Leu258–His280, Phe286–His308, and Tyr314–His338. Positions Thr361 to Pro385 are disordered. Residues Phe374–Pro385 are compositionally biased toward polar residues.

Belongs to the hunchback C2H2-type zinc-finger protein family.

The protein resides in the nucleus. Functionally, gap class segmentation protein that controls development of head structures. The chain is Protein hunchback (hb) from Bombyx mori (Silk moth).